The following is a 520-amino-acid chain: AarF domain-containing protein kinase 1 (520 aa).

Positions 148-455 (EFEKTPLGAA…GTHSSSSAFF (308 aa)) constitute a Protein kinase domain. ATP contacts are provided by residues 154–162 (LGAASLAQV) and K176. Catalysis depends on D308, which acts as the Proton acceptor.

This sequence belongs to the protein kinase superfamily. ADCK protein kinase family.

The protein resides in the mitochondrion. In terms of biological role, appears to be essential for maintaining mitochondrial cristae formation and mitochondrial function by acting via YME1L1 in a kinase-independent manner to regulate essential mitochondrial structural proteins OPA1 and IMMT. The action of this enzyme is not yet clear. It is not known if it has protein kinase activity and what type of substrate it would phosphorylate (Ser, Thr or Tyr). The polypeptide is AarF domain-containing protein kinase 1 (adck1) (Xenopus laevis (African clawed frog)).